The chain runs to 197 residues: Dephospho-CoA kinase (197 aa).

Residues 2 to 197 (IIGITGGIAS…SALLSLANPR (196 aa)) form the DPCK domain. Position 10-15 (10-15 (ASGKST)) interacts with ATP.

Belongs to the CoaE family.

The protein resides in the cytoplasm. The catalysed reaction is 3'-dephospho-CoA + ATP = ADP + CoA + H(+). It participates in cofactor biosynthesis; coenzyme A biosynthesis; CoA from (R)-pantothenate: step 5/5. Its function is as follows. Catalyzes the phosphorylation of the 3'-hydroxyl group of dephosphocoenzyme A to form coenzyme A. The polypeptide is Dephospho-CoA kinase (Streptococcus pyogenes serotype M3 (strain ATCC BAA-595 / MGAS315)).